Here is a 1012-residue protein sequence, read N- to C-terminus: AP-2 complex subunit alpha-1 (1012 aa).

HEAT repeat units lie at residues 254–289 (AMRA…VVKN), 354–391 (DIIK…VSNA), 393–430 (DIVE…DLSW), and 525–565 (PTIP…CIDV). Residues 652–678 (STDPESVARSLSHPNGTLSNIDPQTPS) form a disordered region. Residues 663–675 (SHPNGTLSNIDPQ) show a composition bias toward polar residues. Positions 742–841 (ALCLKDSGVL…LDFSYKFGAN (100 aa)) constitute a GAE domain.

This sequence belongs to the adaptor complexes large subunit family. As to quaternary structure, adaptor protein complex 2 (AP-2) is a heterotetramer composed of two large adaptins (alpha-type and beta-type subunits), a medium adaptin (mu-type subunit) and a small adaptin (sigma-type subunit). Binds to EPSIN2.

Its subcellular location is the membrane. The protein localises to the coated pit. Functionally, subunit of the adaptor protein complex 2 (AP-2). Adaptor protein complexes function in protein transport via transport vesicles in different membrane traffic pathways. Adaptor protein complexes are vesicle coat components and appear to be involved in cargo selection and vesicle formation. AP-2 is involved in clathrin-dependent endocytosis in which cargo proteins are incorporated into vesicles surrounded by clathrin (clathrin-coated vesicles, CCVs) which are destined for fusion with the early endosome. The complex binds polyphosphoinositides. The protein is AP-2 complex subunit alpha-1 (ALPHA-ADR) of Arabidopsis thaliana (Mouse-ear cress).